Reading from the N-terminus, the 327-residue chain is Undecaprenyl-phosphate 4-deoxy-4-formamido-L-arabinose transferase (327 aa).

Over 1–235 (MFDAAPIKKV…TCLTTTPLRL (235 aa)) the chain is Cytoplasmic. Residues 236–256 (LSLLGSVIAIGGFSLSVLLIV) traverse the membrane as a helical segment. Residues 257 to 269 (LRLALGPQWAAEG) are Periplasmic-facing. Residues 270–290 (VFMLFAVLFTFIGAQFIGMGL) traverse the membrane as a helical segment. Topologically, residues 291 to 327 (LGEYIGRIYNDVRARPRYFVQQVIYPESTPFTEESHQ) are cytoplasmic.

This sequence belongs to the glycosyltransferase 2 family.

It localises to the cell inner membrane. The catalysed reaction is UDP-4-deoxy-4-formamido-beta-L-arabinose + di-trans,octa-cis-undecaprenyl phosphate = 4-deoxy-4-formamido-alpha-L-arabinopyranosyl di-trans,octa-cis-undecaprenyl phosphate + UDP. It functions in the pathway glycolipid biosynthesis; 4-amino-4-deoxy-alpha-L-arabinose undecaprenyl phosphate biosynthesis; 4-amino-4-deoxy-alpha-L-arabinose undecaprenyl phosphate from UDP-4-deoxy-4-formamido-beta-L-arabinose and undecaprenyl phosphate: step 1/2. The protein operates within bacterial outer membrane biogenesis; lipopolysaccharide biosynthesis. Functionally, catalyzes the transfer of 4-deoxy-4-formamido-L-arabinose from UDP to undecaprenyl phosphate. The modified arabinose is attached to lipid A and is required for resistance to polymyxin and cationic antimicrobial peptides. This chain is Undecaprenyl-phosphate 4-deoxy-4-formamido-L-arabinose transferase, found in Salmonella dublin (strain CT_02021853).